Reading from the N-terminus, the 373-residue chain is Ca(2+)/H(+) antiporter (373 aa).

The next 11 helical transmembrane spans lie at 6–26 (TIFFGLLLFIPISLLGHWLHW), 29–49 (VSIFLTASLAIIPLAAFMGEA), 61–81 (LGGLLNATFGNATELILAFIA), 94–114 (ITGSIISNLLLVMGFAMLLGG), 134–154 (MNLAVIAILLPTAVEHTSNGI), 162–182 (LSVAVAIVLIIVYGLTLLFSM), 220–240 (FWLGILLVVTITVAIESELLV), 249–269 (SLGLTALFTGVILLPVIGNAA), 291–311 (VGSTLQIALFVAPVLVIAGWI), 318–338 (LDFNPFELVAVAVSVLIANSI), and 349–369 (GSLLLATYIVIGLAFFFHPVV).

The protein belongs to the Ca(2+):cation antiporter (CaCA) (TC 2.A.19) family. Cation/proton exchanger (CAX) subfamily.

It localises to the cell inner membrane. Its function is as follows. Ca(+)/H(+) antiporter that extrudes calcium in exchange for external protons. Plays an important role in salt tolerance. Does not transport sodium or lithium. This Aphanothece halophytica protein is Ca(2+)/H(+) antiporter.